A 139-amino-acid chain; its full sequence is uncharacterized protein (139 aa).

3 helical membrane passes run 38–60 (YFLH…LYVF), 72–94 (FIIL…CAGS), and 114–136 (ITVV…LIVA).

It is found in the cell membrane. This is an uncharacterized protein from Treponema pallidum (strain Nichols).